We begin with the raw amino-acid sequence, 146 residues long: BCL7-like protein (146 aa).

Positions 59–146 are disordered; the sequence is MAPPKIKEVK…RDAEMTSKQP (88 aa). Polar residues-rich tracts occupy residues 75 to 90 and 113 to 134; these read NQVPSAENSQDSTSVT and DSNQTFEPQNYQGGATGSTDFS. Over residues 135–146 the composition is skewed to basic and acidic residues; sequence SMRDAEMTSKQP.

Belongs to the BCL7 family. As to expression, ubiquitous.

The protein resides in the nucleus. Functionally, required for the terminal differentiation of seam cells, and the differentiation of distal tip cells important for normal somatic gonad and germ cell development. Plays a role in the Wnt signaling pathway, regulating the expression of beta-catenin homologs wrm-1, bar-1 and sys-1, and the localization of wrm-1 and the wnt signaling pathway component pop-1 during asymmetric cell division of seam cells and the Z-cell lineage of the somatic gonad, respectively. May have a pro-apoptotic role, possibly linked to the negative regulation of expression of anti-apoptotic factor ced-9. The protein is BCL7-like protein of Caenorhabditis elegans.